We begin with the raw amino-acid sequence, 204 residues long: LexA repressor (204 aa).

The segment at residues 29–49 is a DNA-binding region (H-T-H motif); it reads VREIGDAVGLMSSSTVHGHLQ. Catalysis depends on for autocatalytic cleavage activity residues S127 and K164.

This sequence belongs to the peptidase S24 family. In terms of assembly, homodimer.

The catalysed reaction is Hydrolysis of Ala-|-Gly bond in repressor LexA.. Represses a number of genes involved in the response to DNA damage (SOS response), including recA and lexA. In the presence of single-stranded DNA, RecA interacts with LexA causing an autocatalytic cleavage which disrupts the DNA-binding part of LexA, leading to derepression of the SOS regulon and eventually DNA repair. This Desulfitobacterium hafniense (strain DSM 10664 / DCB-2) protein is LexA repressor.